The primary structure comprises 2253 residues: Protein Ycf2 (2253 aa).

1600–1607 is an ATP binding site; that stretch reads GFIGTGRS.

It belongs to the Ycf2 family.

It localises to the plastid. The protein resides in the chloroplast stroma. In terms of biological role, probable ATPase of unknown function. Its presence in a non-photosynthetic plant (Epifagus virginiana) and experiments in tobacco indicate that it has an essential function which is probably not related to photosynthesis. This chain is Protein Ycf2, found in Nymphaea alba (White water-lily).